The primary structure comprises 44 residues: Cytochrome b559 subunit beta (44 aa).

The chain crosses the membrane as a helical span at residues 17–41; the sequence is VRWLAVHTLAVPSVFFVGAIAAMQF. Heme contacts are provided by arginine 18 and histidine 23.

This sequence belongs to the PsbE/PsbF family. As to quaternary structure, heterodimer of an alpha subunit and a beta subunit. PSII is composed of 1 copy each of membrane proteins PsbA, PsbB, PsbC, PsbD, PsbE, PsbF, PsbH, PsbI, PsbJ, PsbK, PsbL, PsbM, PsbT, PsbX, PsbY, PsbZ, Psb30/Ycf12, peripheral proteins PsbO, CyanoQ (PsbQ), PsbU, PsbV and a large number of cofactors. It forms dimeric complexes. Heme b is required as a cofactor.

It is found in the cellular thylakoid membrane. Functionally, this b-type cytochrome is tightly associated with the reaction center of photosystem II (PSII). PSII is a light-driven water:plastoquinone oxidoreductase that uses light energy to abstract electrons from H(2)O, generating O(2) and a proton gradient subsequently used for ATP formation. It consists of a core antenna complex that captures photons, and an electron transfer chain that converts photonic excitation into a charge separation. This is Cytochrome b559 subunit beta from Synechocystis sp. (strain ATCC 27184 / PCC 6803 / Kazusa).